Consider the following 406-residue polypeptide: Elongation factor Tu (406 aa).

The region spanning 10 to 215 (KPHVNVGTIG…AIDEYIPTPV (206 aa)) is the tr-type G domain. The tract at residues 19 to 26 (GHVDHGKT) is G1. 19–26 (GHVDHGKT) contributes to the GTP binding site. Thr-26 is a Mg(2+) binding site. A G2 region spans residues 61-65 (GITIN). Residues 82 to 85 (DCPG) form a G3 region. GTP contacts are provided by residues 82-86 (DCPGH) and 137-140 (NKVD). Positions 137 to 140 (NKVD) are G4. The tract at residues 175–177 (SAL) is G5.

Belongs to the TRAFAC class translation factor GTPase superfamily. Classic translation factor GTPase family. EF-Tu/EF-1A subfamily. As to quaternary structure, monomer.

It localises to the cytoplasm. It carries out the reaction GTP + H2O = GDP + phosphate + H(+). Its function is as follows. GTP hydrolase that promotes the GTP-dependent binding of aminoacyl-tRNA to the A-site of ribosomes during protein biosynthesis. In Thermus thermophilus (strain ATCC BAA-163 / DSM 7039 / HB27), this protein is Elongation factor Tu.